Reading from the N-terminus, the 110-residue chain is Parvalbumin alpha (110 aa).

EF-hand domains follow at residues Lys-39–Asn-74 and Leu-78–Ser-110. Residues Asp-52, Asp-54, Ser-56, Phe-58, Glu-60, Glu-63, Asp-91, Asp-93, Asp-95, Lys-97, and Glu-102 each coordinate Ca(2+).

It belongs to the parvalbumin family.

In terms of biological role, in muscle, parvalbumin is thought to be involved in relaxation after contraction. It binds two calcium ions. In Aquarana catesbeiana (American bullfrog), this protein is Parvalbumin alpha.